A 252-amino-acid polypeptide reads, in one-letter code: Ribosomal RNA small subunit methyltransferase J (252 aa).

S-adenosyl-L-methionine is bound by residues 105–106, 121–122, and Asp175; these read RD and ER.

This sequence belongs to the methyltransferase superfamily. RsmJ family.

Its subcellular location is the cytoplasm. The catalysed reaction is guanosine(1516) in 16S rRNA + S-adenosyl-L-methionine = N(2)-methylguanosine(1516) in 16S rRNA + S-adenosyl-L-homocysteine + H(+). In terms of biological role, specifically methylates the guanosine in position 1516 of 16S rRNA. The polypeptide is Ribosomal RNA small subunit methyltransferase J (Pasteurella multocida (strain Pm70)).